The sequence spans 305 residues: Probable GTP 3',8-cyclase (305 aa).

One can recognise a Radical SAM core domain in the interval 6 to 233 (RHGRPVMSLR…MQDRKKYYID (228 aa)). R15 provides a ligand contact to GTP. C22 and C26 together coordinate [4Fe-4S] cluster. Residue Y28 participates in S-adenosyl-L-methionine binding. C29 is a binding site for [4Fe-4S] cluster. Position 62 (R62) interacts with GTP. S-adenosyl-L-methionine is bound at residue G66. T92 provides a ligand contact to GTP. Residue S116 participates in S-adenosyl-L-methionine binding. Position 153 (K153) interacts with GTP. C249 and C252 together coordinate [4Fe-4S] cluster. GTP is bound at residue 254 to 256 (RLR). A [4Fe-4S] cluster-binding site is contributed by C266.

It belongs to the radical SAM superfamily. MoaA family. Requires [4Fe-4S] cluster as cofactor.

The catalysed reaction is GTP + AH2 + S-adenosyl-L-methionine = (8S)-3',8-cyclo-7,8-dihydroguanosine 5'-triphosphate + 5'-deoxyadenosine + L-methionine + A + H(+). The protein operates within cofactor biosynthesis; molybdopterin biosynthesis. In terms of biological role, catalyzes the cyclization of GTP to (8S)-3',8-cyclo-7,8-dihydroguanosine 5'-triphosphate. The chain is Probable GTP 3',8-cyclase from Methanothermobacter thermautotrophicus (strain ATCC 29096 / DSM 1053 / JCM 10044 / NBRC 100330 / Delta H) (Methanobacterium thermoautotrophicum).